The primary structure comprises 85 residues: UPF0291 protein SPH_1589 (85 aa).

Positions 62 to 85 (TPEKLRQVQREKGLHGRSLDDPNS) are disordered.

Belongs to the UPF0291 family.

It localises to the cytoplasm. This chain is UPF0291 protein SPH_1589, found in Streptococcus pneumoniae (strain Hungary19A-6).